The sequence spans 425 residues: Histidine--tRNA ligase (425 aa).

It belongs to the class-II aminoacyl-tRNA synthetase family. In terms of assembly, homodimer.

Its subcellular location is the cytoplasm. The catalysed reaction is tRNA(His) + L-histidine + ATP = L-histidyl-tRNA(His) + AMP + diphosphate + H(+). This Streptococcus uberis (strain ATCC BAA-854 / 0140J) protein is Histidine--tRNA ligase.